The following is a 295-amino-acid chain: Vesicle-associated protein 4-2 (295 aa).

Residues 1–10 (MTMTEEKPTS) are compositionally biased toward basic and acidic residues. A disordered region spans residues 1–99 (MTMTEEKPTS…PSPSVSSVAK (99 aa)). The segment covering 31 to 53 (NAASSAATSPFPSGASSSSTSSH) has biased composition (low complexity). Residues 54–71 (LHNHHQHHHQHHHQHHHQ) show a composition bias toward basic residues. Over residues 83–98 (GQNQHPTPSPSVSSVA) the composition is skewed to polar residues. Positions 107–229 (RLKLDPSEKL…KEQILRVIFL (123 aa)) constitute an MSP domain. The segment covering 249-263 (DAAVEARKKPPEETG) has biased composition (basic and acidic residues). The tract at residues 249–270 (DAAVEARKKPPEETGPKMIGEG) is disordered. At Ser294 the chain carries Phosphoserine.

The protein belongs to the VAMP-associated protein (VAP) (TC 9.B.17) family.

Functionally, may play a role in vesicle trafficking. This chain is Vesicle-associated protein 4-2 (PVA42), found in Arabidopsis thaliana (Mouse-ear cress).